We begin with the raw amino-acid sequence, 943 residues long: Glycine dehydrogenase (decarboxylating) (943 aa).

Residue K695 is modified to N6-(pyridoxal phosphate)lysine.

The protein belongs to the GcvP family. In terms of assembly, the glycine cleavage system is composed of four proteins: P, T, L and H. It depends on pyridoxal 5'-phosphate as a cofactor.

The catalysed reaction is N(6)-[(R)-lipoyl]-L-lysyl-[glycine-cleavage complex H protein] + glycine + H(+) = N(6)-[(R)-S(8)-aminomethyldihydrolipoyl]-L-lysyl-[glycine-cleavage complex H protein] + CO2. Its function is as follows. The glycine cleavage system catalyzes the degradation of glycine. The P protein binds the alpha-amino group of glycine through its pyridoxal phosphate cofactor; CO(2) is released and the remaining methylamine moiety is then transferred to the lipoamide cofactor of the H protein. The protein is Glycine dehydrogenase (decarboxylating) of Jannaschia sp. (strain CCS1).